Here is a 103-residue protein sequence, read N- to C-terminus: UPF0145 protein NT01CX_0170 (103 aa).

This sequence belongs to the UPF0145 family.

In Clostridium novyi (strain NT), this protein is UPF0145 protein NT01CX_0170.